The sequence spans 338 residues: GTPase Obg (338 aa).

One can recognise an Obg domain in the interval 1-159 (MSFIDEVKIH…RWLRLELKLM (159 aa)). The 172-residue stretch at 160-331 (ADVGLLGMPS…LLDEIARQLW (172 aa)) folds into the OBG-type G domain. Residues 166–173 (GMPSVGKS), 191–195 (FTTLK), 213–216 (DIPG), 283–286 (NKMD), and 312–314 (SAA) each bind GTP. The Mg(2+) site is built by serine 173 and threonine 193.

Belongs to the TRAFAC class OBG-HflX-like GTPase superfamily. OBG GTPase family. Monomer. Mg(2+) serves as cofactor.

The protein resides in the cytoplasm. Its function is as follows. An essential GTPase which binds GTP, GDP and possibly (p)ppGpp with moderate affinity, with high nucleotide exchange rates and a fairly low GTP hydrolysis rate. Plays a role in control of the cell cycle, stress response, ribosome biogenesis and in those bacteria that undergo differentiation, in morphogenesis control. The polypeptide is GTPase Obg (Geotalea daltonii (strain DSM 22248 / JCM 15807 / FRC-32) (Geobacter daltonii)).